Consider the following 965-residue polypeptide: Glycine dehydrogenase (decarboxylating) (965 aa).

N6-(pyridoxal phosphate)lysine is present on Lys-711.

The protein belongs to the GcvP family. The glycine cleavage system is composed of four proteins: P, T, L and H. The cofactor is pyridoxal 5'-phosphate.

The catalysed reaction is N(6)-[(R)-lipoyl]-L-lysyl-[glycine-cleavage complex H protein] + glycine + H(+) = N(6)-[(R)-S(8)-aminomethyldihydrolipoyl]-L-lysyl-[glycine-cleavage complex H protein] + CO2. Functionally, the glycine cleavage system catalyzes the degradation of glycine. The P protein binds the alpha-amino group of glycine through its pyridoxal phosphate cofactor; CO(2) is released and the remaining methylamine moiety is then transferred to the lipoamide cofactor of the H protein. This Psychrobacter arcticus (strain DSM 17307 / VKM B-2377 / 273-4) protein is Glycine dehydrogenase (decarboxylating).